The sequence spans 1120 residues: Transcription-repair-coupling factor (1120 aa).

The Helicase ATP-binding domain maps to aspartate 591–isoleucine 756. ATP is bound at residue glycine 604–threonine 611. Residues aspartate 709 to glutamine 712 carry the DEEQ box motif. The region spanning isoleucine 777–arginine 933 is the Helicase C-terminal domain.

The protein in the N-terminal section; belongs to the UvrB family. In the C-terminal section; belongs to the helicase family. RecG subfamily.

Its subcellular location is the cytoplasm. Its function is as follows. Couples transcription and DNA repair by recognizing RNA polymerase (RNAP) stalled at DNA lesions. Mediates ATP-dependent release of RNAP and its truncated transcript from the DNA, and recruitment of nucleotide excision repair machinery to the damaged site. The sequence is that of Transcription-repair-coupling factor from Rickettsia typhi (strain ATCC VR-144 / Wilmington).